A 510-amino-acid chain; its full sequence is Internal alternative NAD(P)H-ubiquinone oxidoreductase A1, mitochondrial (510 aa).

Residues 1–48 constitute a mitochondrion transit peptide; that stretch reads MLWIKNLARISQTTSSSVGNVFRNPESYTLSSRFCTALQKQQVTDTVQ. 75–105 contributes to the FAD binding site; the sequence is RVLVLGSGWAGCRVLKGIDTSIYDVVCVSPR. Residue 242–278 participates in NAD(+) binding; sequence LHCVVVGGGPTGVEFSGELSDFIMKDVRQRYSHVKDD. Residues 501–510 carry the Microbody targeting signal motif; that stretch reads FVFGRDISRI.

This sequence belongs to the NADH dehydrogenase family. FAD serves as cofactor. In terms of tissue distribution, expressed in seedlings, cotyledons, young leaves, stems and flowers and, to a lower extent, in roots and buds.

It localises to the mitochondrion inner membrane. The protein resides in the peroxisome. It catalyses the reaction a quinone + NADH + H(+) = a quinol + NAD(+). It carries out the reaction a ubiquinone + NADH + H(+) = a ubiquinol + NAD(+). Alternative NADH-ubiquinone oxidoreductase which catalyzes the oxidation of mitochondrial NADH does not translocate protons across the inner mitochondrial membrane. The polypeptide is Internal alternative NAD(P)H-ubiquinone oxidoreductase A1, mitochondrial (NDA1) (Arabidopsis thaliana (Mouse-ear cress)).